A 1852-amino-acid polypeptide reads, in one-letter code: Voltage-dependent L-type calcium channel subunit alpha-1S (1852 aa).

The interval 1 to 23 (MEPPSPQDEGLRKKQPKKPVPEI) is disordered. Residues 1–51 (MEPPSPQDEGLRKKQPKKPVPEILPRPPRALFCLTLQNPLRKACISIVEWK) are Cytoplasmic-facing. The stretch at 38-337 (NPLRKACISI…LVLGVLSGEF (300 aa)) is one I repeat. Residues 52-70 (PFETIILLTIFANCVALAV) form a helical membrane-spanning segment. At 71-85 (YLPMPEDDNNTLNLG) the chain is on the extracellular side. Asn-79 carries an N-linked (GlcNAc...) asparagine glycan. The helical transmembrane segment at 86 to 106 (LEKLEYFFLIVFSIEAAMKII) threads the bilayer. The Cytoplasmic segment spans residues 107 to 115 (AYGFLFHQD). Residues 116-136 (AYLRSGWNVLDFIIVFLGVFT) form a helical membrane-spanning segment. The Extracellular portion of the chain corresponds to 137–160 (VILEQVNIIQTNTAPMSSKGAGLD). Residues 161-179 (VKALRAFRVLRPLRLVSGV) traverse the membrane as a helical segment. Topologically, residues 180–196 (PSLQVVLNSIFKAMLPL) are cytoplasmic. A helical transmembrane segment spans residues 197–218 (FHIALLVLFMVIIYAIIGLELF). At 219-279 (KGKMHKTCYF…HGITHFDNFG (61 aa)) the chain is on the extracellular side. 2 cysteine pairs are disulfide-bonded: Cys-226–Cys-254 and Cys-245–Cys-261. A glycan (N-linked (GlcNAc...) asparagine) is linked at Asn-257. Residues 280 to 301 (FSMLTVYQCISMEGWTDVLYWV) constitute an intramembrane region (pore-forming). The short motif at 290–293 (SMEG) is the Selectivity filter of repeat I element. Glu-292 provides a ligand contact to Ca(2+). The Extracellular segment spans residues 302–309 (NDAIGNEW). Residues 310–330 (PWIYFVTLILLGSFFILNLVL) traverse the membrane as a helical segment. Topologically, residues 331–432 (GVLSGEFTKE…WKCHDLVKSK (102 aa)) are cytoplasmic. The segment at 357–374 (QQLEEDLRGYMSWITQGE) is binding to the beta subunit. Phosphoserine is present on residues Ser-393 and Ser-397. An II repeat occupies 418–664 (NRVFRWKCHD…VFLAIAVDNL (247 aa)). Residues 433–451 (VFYWLVILIVALNTLSIAS) traverse the membrane as a helical segment. Topologically, residues 452–462 (EHHNQPLWLTH) are extracellular. A helical membrane pass occupies residues 463–483 (LQDVANRVLLTLFTIEMLMKM). Residues 484–494 (YGLGLRQYFMS) lie on the Cytoplasmic side of the membrane. The chain crosses the membrane as a helical span at residues 495–514 (IFNRFDCFVVCSGILEILLV). Over 515–523 (ESGAMSPLG) the chain is Extracellular. Residues 524–542 (ISVLRCIRLLRLFKITKYW) traverse the membrane as a helical segment. Over 543–561 (TSLSNLVASLLNSIRSIAS) the chain is Cytoplasmic. The helical transmembrane segment at 562-581 (LLLLLFLFIIIFALLGMQLF) threads the bilayer. Residues 582–601 (GGRYDFEDTEVRRSNFDNFP) are Extracellular-facing. Residues 602-623 (QALISVFQVLTGEDWNSVMYNG) constitute an intramembrane region (pore-forming). Positions 612-615 (TGED) match the Selectivity filter of repeat II motif. Residue Glu-614 coordinates Ca(2+). Topologically, residues 624-633 (IMAYGGPTYP) are extracellular. The chain crosses the membrane as a helical span at residues 634–653 (GVLVCIYFIILFVCGNYILL). The Cytoplasmic portion of the chain corresponds to 654-799 (NVFLAIAVDN…VLCHRIVNAT (146 aa)). 2 disordered regions span residues 675-712 (KAKAEERKRRKMSKGLPDKSEEERATVTKKLEQKSKGE) and 731-757 (EVKDPYPSADFPGDDEEDEPEIPVSPR). Ser-687 bears the Phosphoserine; by PKA mark. A compositionally biased stretch (basic and acidic residues) spans 690–711 (LPDKSEEERATVTKKLEQKSKG). The span at 742–751 (PGDDEEDEPE) shows a compositional bias: acidic residues. One copy of the III repeat lies at 768-1068 (EKAVPIPEAS…IFVGFVIVTF (301 aa)). The chain crosses the membrane as a helical span at residues 800 to 818 (WFTNFILLFILLSSAALAA). Residues 819–830 (EDPIRADSMRNQ) are Extracellular-facing. The helical transmembrane segment at 831-850 (ILEYFDYVFTAVFTVEIVLK) threads the bilayer. Residues 851-866 (MTTYGAFLHKGSFCRN) are Cytoplasmic-facing. A helical membrane pass occupies residues 867 to 885 (YFNILDLLVVAVSLISMGL). Residues 886 to 892 (ESSAISV) are Extracellular-facing. The chain crosses the membrane as a helical span at residues 893 to 911 (VKILRVLRVLRPLRAINRA). The Cytoplasmic portion of the chain corresponds to 912 to 930 (KGLKHVVQCVFVAIRTIGN). A helical membrane pass occupies residues 931 to 950 (IVLVTTLLQFMFACIGVQLF). Over 951 to 1000 (KGKFYSCNDLSKMTEEECRGYYYIYKDGDPTQIELRPRQWIHNDFHFDNV) the chain is Extracellular. Cys-957 and Cys-968 form a disulfide bridge. The tract at residues 988 to 1077 (RQWIHNDFHF…FQEQGETEYK (90 aa)) is dihydropyridine binding. An intramembrane region (pore-forming) is located at residues 1001–1021 (LSAMMSLFTVSTFEGWPQLLY). Positions 1012-1015 (TFEG) match the Selectivity filter of repeat III motif. Glu-1014 contributes to the Ca(2+) binding site. Residues 1022–1038 (KAIDSNEEDTGPVYNNR) lie on the Extracellular side of the membrane. A helical transmembrane segment spans residues 1039–1060 (VEMAIFFIIYIILIAFFMMNIF). The Cytoplasmic portion of the chain corresponds to 1061-1118 (VGFVIVTFQEQGETEYKNCELDKNQRQCVQYALKARPLRCYIPKNPYQYQVWYVVTSS). The IV repeat unit spans residues 1105–1384 (NPYQYQVWYV…LFVAVIMDNF (280 aa)). The helical transmembrane segment at 1119–1140 (YFEYLMFALIMLNTICLGMQHY) threads the bilayer. Asn-1141 carries N-linked (GlcNAc...) asparagine glycosylation. At 1141 to 1148 (NQSEQMNH) the chain is on the extracellular side. The helical transmembrane segment at 1149-1170 (ISDILNVAFTIIFTLEMVLKLI) threads the bilayer. Residues 1171 to 1180 (AFKPRGYFGD) lie on the Cytoplasmic side of the membrane. Residues 1181–1200 (PWNVFDFLIVIGSIIDVILS) form a helical membrane-spanning segment. At 1201 to 1231 (EIDTFLASSGGLYCLGGGCGNVDPDESARIS) the chain is on the extracellular side. Residues 1232–1250 (SAFFRLFRVMRLVKLLNRA) form a helical membrane-spanning segment. The Cytoplasmic segment spans residues 1251 to 1268 (EGVRTLLWTFIKSFQALP). A helical transmembrane segment spans residues 1269-1289 (YVALLIVMLFFIYAVIGMQMF). Residues 1290 to 1311 (GKIAMVDGTQINRNNNFQTFPQ) are Extracellular-facing. The pore-forming intramembrane region spans 1312–1330 (AVLLLFRCATGEAWQEILL). The Selectivity filter of repeat IV motif lies at 1321–1324 (TGEA). Residues 1331–1356 (ACSYGKLCDPESDYAPGEEHTCGTNF) are Extracellular-facing. The dihydropyridine binding stretch occupies residues 1337 to 1403 (LCDPESDYAP…LGPHHLDEFK (67 aa)). A disulfide bridge links Cys-1338 with Cys-1352. 2 phenylalkylamine binding regions span residues 1349–1391 (EHTC…TRDW) and 1349–1392 (EHTC…RDWS). The chain crosses the membrane as a helical span at residues 1357–1381 (AYYYFISFYMLCAFLIINLFVAVIM). Topologically, residues 1382–1852 (DNFDYLTRDW…PEGGAVPWEP (471 aa)) are cytoplasmic. An interaction with calmodulin region spans residues 1522-1542 (KFYATFLIQEHFRKFMKRQEE). Position 1575 is a phosphoserine; by PKA and CAMK2 (Ser-1575). Position 1579 is a phosphothreonine (Thr-1579). Residue Ser-1617 is modified to Phosphoserine; by PKA. Disordered regions lie at residues 1702 to 1721 (GPLSQPCRASGPHSRSHVDK) and 1727 to 1762 (TQRGMPEGQVPPSPCQVTGAKAEHPVQKEGKGPTSR). Residues 1747 to 1757 (KAEHPVQKEGK) are compositionally biased toward basic and acidic residues.

The protein belongs to the calcium channel alpha-1 subunit (TC 1.A.1.11) family. CACNA1S subfamily. Component of a calcium channel complex consisting of a pore-forming alpha subunit (CACNA1S) and the ancillary subunits CACNB1 or CACNB2, CACNG1 and CACNA2D1. The channel complex contains alpha, beta, gamma and delta subunits in a 1:1:1:1 ratio, i.e. it contains either CACNB1 or CACNB2. CACNA1S channel activity is modulated by the auxiliary subunits (CACNB1 or CACNB2, CACNG1 and CACNA2D1). Interacts with DYSF and JSRP1. Interacts with RYR1. Interacts with STAC, STAC2 and STAC3 (via their SH3 domains). Interacts with CALM. Post-translationally, the alpha-1S subunit is found in two isoforms in the skeletal muscle: a minor form of 212 kDa containing the complete amino acid sequence, and a major form of 190 kDa derived from the full-length form by post-translational proteolysis close to Phe-1690. Phosphorylated. Phosphorylation by PKA activates the calcium channel. Both the minor and major forms are phosphorylated in vitro by PKA. Phosphorylation at Ser-1575 is involved in beta-adrenergic-mediated regulation of the channel.

It is found in the cell membrane. The protein resides in the sarcolemma. Its subcellular location is the T-tubule. It carries out the reaction Ca(2+)(in) = Ca(2+)(out). With respect to regulation, channel activity is blocked by dihydropyridines (DHP), phenylalkylamines, and by benzothiazepines. In terms of biological role, pore-forming, alpha-1S subunit of the voltage-gated calcium channel that gives rise to L-type calcium currents in skeletal muscle. Calcium channels containing the alpha-1S subunit play an important role in excitation-contraction coupling in skeletal muscle via their interaction with RYR1, which triggers Ca(2+) release from the sarcplasmic reticulum and ultimately results in muscle contraction. Long-lasting (L-type) calcium channels belong to the 'high-voltage activated' (HVA) group. The protein is Voltage-dependent L-type calcium channel subunit alpha-1S (Cacna1s) of Mus musculus (Mouse).